Here is a 1212-residue protein sequence, read N- to C-terminus: Probable serine/threonine-protein kinase DDB_G0284491 (1212 aa).

The chain crosses the membrane as a helical span at residues 197 to 217 (LFHSFSLLNLYVYLIIVIRII). 14 N-linked (GlcNAc...) asparagine glycosylation sites follow: Asn-229, Asn-299, Asn-309, Asn-328, Asn-335, Asn-341, Asn-344, Asn-391, Asn-419, Asn-422, Asn-426, Asn-427, Asn-435, and Asn-499. Positions 288 to 329 (LNNNNDNNLNNNNSNNNLNNNNNSNSNFNNDNNLNSNINSND) are disordered. 2 disordered regions span residues 412–439 (GNSN…NSGG) and 489–517 (IIKN…DYEE). The segment covering 489–507 (IIKNNNNNNNNNSNNNNNN) has biased composition (low complexity). The span at 508-517 (NDEDDSDYEE) shows a compositional bias: acidic residues. Residues 673-693 (IQIFDDYSLIIALRLLMNFIL) traverse the membrane as a helical segment. Positions 703 to 720 (VPPPPTQPSSRPQSPPTV) are enriched in pro residues. Disordered regions lie at residues 703–733 (VPPP…HHSG) and 751–813 (EVVS…NNNN). In terms of domain architecture, Protein kinase spans 865–1182 (ETEIEPFASG…EVYNDLQDIY (318 aa)). ATP-binding positions include 871–879 (FASGGQANI) and Lys-924. Asp-1035 acts as the Proton acceptor in catalysis.

This sequence belongs to the protein kinase superfamily. Ser/Thr protein kinase family.

The protein localises to the membrane. It carries out the reaction L-seryl-[protein] + ATP = O-phospho-L-seryl-[protein] + ADP + H(+). The enzyme catalyses L-threonyl-[protein] + ATP = O-phospho-L-threonyl-[protein] + ADP + H(+). In Dictyostelium discoideum (Social amoeba), this protein is Probable serine/threonine-protein kinase DDB_G0284491.